Reading from the N-terminus, the 138-residue chain is Nucleoside diphosphate kinase (138 aa).

Positions 11, 59, 87, 93, 104, and 114 each coordinate ATP. Catalysis depends on His-117, which acts as the Pros-phosphohistidine intermediate.

Belongs to the NDK family. Requires Mg(2+) as cofactor.

It is found in the cytoplasm. The catalysed reaction is a 2'-deoxyribonucleoside 5'-diphosphate + ATP = a 2'-deoxyribonucleoside 5'-triphosphate + ADP. It catalyses the reaction a ribonucleoside 5'-diphosphate + ATP = a ribonucleoside 5'-triphosphate + ADP. Major role in the synthesis of nucleoside triphosphates other than ATP. The ATP gamma phosphate is transferred to the NDP beta phosphate via a ping-pong mechanism, using a phosphorylated active-site intermediate. The sequence is that of Nucleoside diphosphate kinase from Saccharolobus solfataricus (strain ATCC 35092 / DSM 1617 / JCM 11322 / P2) (Sulfolobus solfataricus).